A 459-amino-acid chain; its full sequence is Putrescine aminotransferase (459 aa).

Residues 150–151 and Gln274 contribute to the pyridoxal 5'-phosphate site; that span reads GT. N6-(pyridoxal phosphate)lysine is present on Lys300. Thr332 lines the pyridoxal 5'-phosphate pocket.

It belongs to the class-III pyridoxal-phosphate-dependent aminotransferase family. Putrescine aminotransferase subfamily. Pyridoxal 5'-phosphate serves as cofactor.

The catalysed reaction is an alkane-alpha,omega-diamine + 2-oxoglutarate = an omega-aminoaldehyde + L-glutamate. It carries out the reaction putrescine + 2-oxoglutarate = 1-pyrroline + L-glutamate + H2O. It catalyses the reaction cadaverine + 2-oxoglutarate = 5-aminopentanal + L-glutamate. It participates in amine and polyamine degradation; putrescine degradation; 4-aminobutanal from putrescine (transaminase route): step 1/1. Its function is as follows. Catalyzes the aminotransferase reaction from putrescine to 2-oxoglutarate, leading to glutamate and 4-aminobutanal, which spontaneously cyclizes to form 1-pyrroline. This is the first step in one of two pathways for putrescine degradation, where putrescine is converted into 4-aminobutanoate (gamma-aminobutyrate or GABA) via 4-aminobutanal. Also functions as a cadaverine transaminase in a a L-lysine degradation pathway to succinate that proceeds via cadaverine, glutarate and L-2-hydroxyglutarate. This is Putrescine aminotransferase from Escherichia coli O6:K15:H31 (strain 536 / UPEC).